We begin with the raw amino-acid sequence, 348 residues long: Malyl-CoA/beta-methylmalyl-CoA/citramalyl-CoA lyase (348 aa).

Substrate is bound by residues 32-33 (HF), lysine 40, and arginine 92. Positions 157 and 184 each coordinate Mg(2+). Substrate is bound by residues 183-184 (AD) and leucine 274.

This sequence belongs to the HpcH/HpaI aldolase family. As to quaternary structure, homohexamer. Dimer of trimers. Mg(2+) serves as cofactor. It depends on Mn(2+) as a cofactor.

The catalysed reaction is (S)-malyl-CoA = glyoxylate + acetyl-CoA. It carries out the reaction (2R,3S)-beta-methylmalyl-CoA = propanoyl-CoA + glyoxylate. The enzyme catalyses (3S)-citramalyl-CoA = pyruvate + acetyl-CoA. With respect to regulation, inhibited by oxalate. Involved in the 3-hydroxypropionate cycle used for autotrophic carbon dioxide fixation, and in the glyoxylate assimilation cycle used to regenerate acetyl-CoA and produce pyruvate as universal precursor for biosynthesis. As a part of the 3-hydroxypropionate cycle, it catalyzes the cleavage of (S)-malyl-CoA to yield acetyl-CoA and glyoxylate. As part of the glyoxylate assimilation cycle, it catalyzes the condensation of glyoxylate with propionyl-CoA to yield (2R,3S)-beta-methylmalyl-CoA, and catalyzes the cleavage of (S)-citramalyl-CoA to yield acetyl-CoA and pyruvate. The sequence is that of Malyl-CoA/beta-methylmalyl-CoA/citramalyl-CoA lyase (mcl) from Chloroflexus aurantiacus.